The chain runs to 137 residues: Proofreading thioesterase EntH (137 aa).

The active-site Nucleophile or proton acceptor is the Glu63.

The protein belongs to the thioesterase PaaI family. In terms of assembly, homotetramer. Dimer of dimers. Interacts specifically with the aryl carrier protein (ArCP) domain of EntB.

It localises to the cytoplasm. Its pathway is siderophore biosynthesis; enterobactin biosynthesis. Required for optimal enterobactin synthesis. Acts as a proofreading enzyme that prevents EntB misacylation by hydrolyzing the thioester bound existing between EntB and wrongly charged molecules. The polypeptide is Proofreading thioesterase EntH (entH) (Klebsiella pneumoniae subsp. pneumoniae (strain ATCC 700721 / MGH 78578)).